Reading from the N-terminus, the 1369-residue chain is DNA-directed RNA polymerase subunit beta (1369 aa).

The protein belongs to the RNA polymerase beta chain family. The RNAP catalytic core consists of 2 alpha, 1 beta, 1 beta' and 1 omega subunit. When a sigma factor is associated with the core the holoenzyme is formed, which can initiate transcription.

It catalyses the reaction RNA(n) + a ribonucleoside 5'-triphosphate = RNA(n+1) + diphosphate. DNA-dependent RNA polymerase catalyzes the transcription of DNA into RNA using the four ribonucleoside triphosphates as substrates. The sequence is that of DNA-directed RNA polymerase subunit beta from Solidesulfovibrio magneticus (strain ATCC 700980 / DSM 13731 / RS-1) (Desulfovibrio magneticus).